We begin with the raw amino-acid sequence, 100 residues long: Integration host factor subunit alpha (100 aa).

The protein belongs to the bacterial histone-like protein family. In terms of assembly, heterodimer of an alpha and a beta chain.

In terms of biological role, this protein is one of the two subunits of integration host factor, a specific DNA-binding protein that functions in genetic recombination as well as in transcriptional and translational control. The sequence is that of Integration host factor subunit alpha from Ruegeria sp. (strain TM1040) (Silicibacter sp.).